A 430-amino-acid chain; its full sequence is Probable proton-coupled zinc antiporter SLC30A4 (430 aa).

The Cytoplasmic segment spans residues 1–113; that stretch reads MAGPGAWKRL…LLKQRKVKTR (113 aa). Ser-36 carries the phosphoserine modification. The helical transmembrane segment at 114-134 threads the bilayer; it reads LTIAAVLYLLFMIGELVGGYM. Over 135–143 the chain is Lumenal; sequence ANSLAIMTD. Residues 144 to 164 form a helical membrane-spanning segment; it reads ALHMLTDLSAIILTLLALWLS. 2 residues coordinate Zn(2+): His-146 and Asp-150. The Cytoplasmic portion of the chain corresponds to 165–178; the sequence is SKSPTRRFTFGFHR. A helical transmembrane segment spans residues 179–199; it reads LEVLSAMISVMLVYVLMGFLL. Topologically, residues 200 to 216 are lumenal; it reads YEAVQRTIHMNYEINGD. Residues 217 to 237 form a helical membrane-spanning segment; the sequence is VMLITAAVGVAVNVIMGFLLN. Over 238 to 275 the chain is Cytoplasmic; sequence QSGHHHSHAHSHSLPSNSPSMVSSGHNHGQDSLAVRAA. A zinc binding region spans residues 240-265; that stretch reads GHHHSHAHSHSLPSNSPSMVSSGHNH. A disordered region spans residues 245–264; the sequence is HAHSHSLPSNSPSMVSSGHN. Residues 249-263 show a composition bias toward low complexity; sequence HSLPSNSPSMVSSGH. The helical transmembrane segment at 276–296 threads the bilayer; the sequence is FVHALGDLVQSVGVLIAAYII. Zn(2+)-binding residues include His-278 and Asp-282. Topologically, residues 297–311 are lumenal; that stretch reads RFKPEYKIADPICTY. Residues 312–332 form a helical membrane-spanning segment; sequence IFSLLVAFTTFRIIWDTVVII. Topologically, residues 333 to 430 are cytoplasmic; that stretch reads LEGVPSHLNV…TCANCHSSST (98 aa).

Belongs to the cation diffusion facilitator (CDF) transporter (TC 2.A.4) family. SLC30A subfamily. As to quaternary structure, homodimerization could regulate efficiency for zinc transport. Interacts with TMEM163. As to expression, widely expressed. Highly expressed in the brain and in mammary epithelial cell lines.

The protein resides in the endosome membrane. It localises to the late endosome membrane. The protein localises to the lysosome membrane. The catalysed reaction is Zn(2+)(in) + 2 H(+)(out) = Zn(2+)(out) + 2 H(+)(in). Functionally, probable proton-coupled zinc ion antiporter mediating zinc import from cytoplasm potentially into the endocytic compartment. Controls zinc deposition in milk. The chain is Probable proton-coupled zinc antiporter SLC30A4 from Mus musculus (Mouse).